Reading from the N-terminus, the 473-residue chain is Uronate isomerase (473 aa).

The protein belongs to the metallo-dependent hydrolases superfamily. Uronate isomerase family.

It carries out the reaction D-glucuronate = D-fructuronate. It catalyses the reaction aldehydo-D-galacturonate = keto-D-tagaturonate. It functions in the pathway carbohydrate metabolism; pentose and glucuronate interconversion. In Geobacillus stearothermophilus (Bacillus stearothermophilus), this protein is Uronate isomerase (uxaC).